A 984-amino-acid polypeptide reads, in one-letter code: Probable beta-galactosidase C (984 aa).

An N-terminal signal peptide occupies residues 1–23 (MRLLSFIYLVWLALLTGTPQVSA). Residues Tyr-82, Asn-127, Ala-128, Glu-129, and Asn-187 each coordinate substrate. Residue Glu-188 is the Proton donor of the active site. The N-linked (GlcNAc...) asparagine glycan is linked to Asn-197. A substrate-binding site is contributed by Tyr-251. A disulfide bridge connects residues Cys-257 and Cys-304. N-linked (GlcNAc...) asparagine glycosylation is present at Asn-276. Glu-287 (nucleophile) is an active-site residue. Residue Tyr-353 participates in substrate binding. Asn-391, Asn-421, Asn-434, Asn-517, Asn-602, Asn-677, Asn-715, Asn-720, Asn-759, and Asn-805 each carry an N-linked (GlcNAc...) asparagine glycan.

It belongs to the glycosyl hydrolase 35 family.

Its subcellular location is the secreted. The enzyme catalyses Hydrolysis of terminal non-reducing beta-D-galactose residues in beta-D-galactosides.. Functionally, cleaves beta-linked terminal galactosyl residues from gangliosides, glycoproteins, and glycosaminoglycans. The chain is Probable beta-galactosidase C (lacC) from Aspergillus oryzae (strain ATCC 42149 / RIB 40) (Yellow koji mold).